The following is a 62-amino-acid chain: Chromatin protein Cren7 2 (62 aa).

It belongs to the Cren7 family. In terms of assembly, monomer. Methylated at multiple sites, to varying extents.

The protein resides in the chromosome. The protein localises to the cytoplasm. A chromatin protein, binds double-stranded DNA without sequence specificity. Constrains negative DNA supercoils. The sequence is that of Chromatin protein Cren7 2 (cren7-2) from Hyperthermus butylicus (strain DSM 5456 / JCM 9403 / PLM1-5).